A 341-amino-acid polypeptide reads, in one-letter code: Krueppel-like factor 17 (341 aa).

A disordered region spans residues 214–252 (VTESNTQEEPFVREPPTPAPEGAESPSTSRGATRRQSPV). Positions 238–252 (SPSTSRGATRRQSPV) are enriched in polar residues. 3 consecutive C2H2-type zinc fingers follow at residues 256-280 (YVCTYNSCGKSYTKRSHLVSHQRKH), 286-310 (FACDWNGCTWKFFRSDELGRHKRIH), and 316-338 (HKCDECDREFMRSDHLRQHKRTH).

This sequence belongs to the Sp1 C2H2-type zinc-finger protein family. As to expression, exclusively expressed in testis and ovary. Localized to step 3-8 spermatids in testis and growing oocytes in ovary.

Its subcellular location is the nucleus. Transcription repressor that binds to the promoter of target genes and prevents their expression. Acts as a negative regulator of epithelial-mesenchymal transition and metastasis in breast cancer. Specifically binds the 5'-CACCC-3' sequence in the promoter of ID1, a key metastasis regulator in breast cancer, and repress its expression. May be a germ cell-specific transcription factor that plays important roles in spermatid differentiation and oocyte development. The sequence is that of Krueppel-like factor 17 (Klf17) from Mus musculus (Mouse).